A 279-amino-acid chain; its full sequence is Virginiamycin B lyase (279 aa).

His215 is a substrate binding site. A Mg(2+)-binding site is contributed by Glu253. His255 functions as the Proton acceptor in the catalytic mechanism. Residue Glu270 coordinates Mg(2+).

The protein belongs to the Vgb family. Monomer. Mg(2+) serves as cofactor.

Its function is as follows. Inactivates the type B streptogramin antibiotics by linearizing the lactone ring at the ester linkage, generating a free phenylglycine carboxylate and converting the threonyl moiety into 2-amino-butenoic acid. The chain is Virginiamycin B lyase from Nocardia farcinica (strain IFM 10152).